The sequence spans 246 residues: Pyridoxine 5'-phosphate synthase (246 aa).

Positions 8 and 19 each coordinate 3-amino-2-oxopropyl phosphate. His44 serves as the catalytic Proton acceptor. Arg46 and His51 together coordinate 1-deoxy-D-xylulose 5-phosphate. The active-site Proton acceptor is Glu76. Residue Thr106 coordinates 1-deoxy-D-xylulose 5-phosphate. The active-site Proton donor is the His198. Residues Asp199 and 221 to 222 each bind 3-amino-2-oxopropyl phosphate; that span reads GH.

It belongs to the PNP synthase family. As to quaternary structure, homooctamer; tetramer of dimers.

The protein localises to the cytoplasm. It catalyses the reaction 3-amino-2-oxopropyl phosphate + 1-deoxy-D-xylulose 5-phosphate = pyridoxine 5'-phosphate + phosphate + 2 H2O + H(+). Its pathway is cofactor biosynthesis; pyridoxine 5'-phosphate biosynthesis; pyridoxine 5'-phosphate from D-erythrose 4-phosphate: step 5/5. Its function is as follows. Catalyzes the complicated ring closure reaction between the two acyclic compounds 1-deoxy-D-xylulose-5-phosphate (DXP) and 3-amino-2-oxopropyl phosphate (1-amino-acetone-3-phosphate or AAP) to form pyridoxine 5'-phosphate (PNP) and inorganic phosphate. The chain is Pyridoxine 5'-phosphate synthase from Mesorhizobium japonicum (strain LMG 29417 / CECT 9101 / MAFF 303099) (Mesorhizobium loti (strain MAFF 303099)).